The sequence spans 348 residues: Rhodopsin (348 aa).

At Met-1 the chain carries N-acetylmethionine. The Extracellular portion of the chain corresponds to 1-36 (MNGTEGPNFYVPFSNKTGVVRSPFEYPQYYLAEPWQ). Residues Asn-2 and Asn-15 are each glycosylated (N-linked (GlcNAc...) asparagine). The helical transmembrane segment at 37 to 61 (FSMLAAYMFLLIVLGFPINFLTLYV) threads the bilayer. Residues 62–73 (TVQHKKLRTPLN) are Cytoplasmic-facing. A helical membrane pass occupies residues 74 to 96 (YILLNLAVADLFMVFGGFTTTLY). Over 97 to 110 (TSLHGYFVFGPTGC) the chain is Extracellular. Cys-110 and Cys-187 are oxidised to a cystine. The helical transmembrane segment at 111-133 (NVEGFFATLGGEIALWSLVVLAI) threads the bilayer. A 'Ionic lock' involved in activated form stabilization motif is present at residues 134–136 (ERY). Over 134 to 152 (ERYVVVCKPMSNFRFGENH) the chain is Cytoplasmic. The helical transmembrane segment at 153–173 (AIMGVAFTWVMALACAAPPLA) threads the bilayer. The Extracellular portion of the chain corresponds to 174-202 (GWSRYIPEGMQCSCGIDYYTLKPEINNES). Glu-201 lines the Zn(2+) pocket. Residues 203-224 (FVIYMFVVHFAIPMIVIFFCYG) traverse the membrane as a helical segment. Residues 225 to 252 (QLVFTVKEAAAQQQESATTQKAEKEVTR) lie on the Cytoplasmic side of the membrane. A helical membrane pass occupies residues 253–274 (MVIIMVIAFLICWVPYASVAFY). At 275 to 286 (IFTHQGSDFGPI) the chain is on the extracellular side. Gln-279 provides a ligand contact to Zn(2+). A helical transmembrane segment spans residues 287–308 (FMTLPAFFAKSSSIYNPVIYIM). Lys-296 is subject to N6-(retinylidene)lysine. The Cytoplasmic segment spans residues 309–348 (MNKQFRNCMITTLCCGKNPLGDDEASASASKTETSQVAPA). S-palmitoyl cysteine attachment occurs at residues Cys-322 and Cys-323. The interval 330–348 (DDEASASASKTETSQVAPA) is interaction with SAG. Residues Ser-334 and Ser-338 each carry the phosphoserine modification. Residues Thr-340 and Thr-342 each carry the phosphothreonine modification. Phosphoserine is present on Ser-343.

It belongs to the G-protein coupled receptor 1 family. Opsin subfamily. Homodimer. May form a complex composed of RHO, GRK1 and RCVRN in a Ca(2+)-dependent manner; RCVRN prevents the interaction between GRK1 and RHO. Interacts with GRK1. Interacts (phosphorylated form) with SAG. Interacts with GNAT1. Interacts with GNAT3. SAG and G-proteins compete for a common binding site. Interacts with PRCD; the interaction promotes PRCD stability. Forms a complex with ASAP1 and ARF4. Forms a complex with ASAP1, RAB11A, Rabin8/RAB3IP, ARF4 and RAB11FIP3; the complex regulates Golgi-to-cilia rhodopsin/RHO transport in photoreceptors. In terms of processing, phosphorylated on some or all of the serine and threonine residues present in the C-terminal region. Contains one covalently linked retinal chromophore. Upon light absorption, the covalently bound 11-cis-retinal is converted to all-trans-retinal. After hydrolysis of the Schiff base and release of the covalently bound all-trans-retinal, active rhodopsin is regenerated by binding of a fresh molecule of 11-cis-retinal.

The protein resides in the membrane. The protein localises to the cell projection. Its subcellular location is the cilium. It is found in the photoreceptor outer segment. In terms of biological role, photoreceptor required for image-forming vision at low light intensity. Required for photoreceptor cell viability after birth. Light-induced isomerization of 11-cis to all-trans retinal triggers a conformational change that activates signaling via G-proteins. Subsequent receptor phosphorylation mediates displacement of the bound G-protein alpha subunit by the arrestin SAG and terminates signaling. This chain is Rhodopsin (RHO), found in Canis lupus familiaris (Dog).